We begin with the raw amino-acid sequence, 121 residues long: Peptidyl-tRNA hydrolase (121 aa).

This sequence belongs to the PTH2 family.

The protein resides in the cytoplasm. The enzyme catalyses an N-acyl-L-alpha-aminoacyl-tRNA + H2O = an N-acyl-L-amino acid + a tRNA + H(+). Its function is as follows. The natural substrate for this enzyme may be peptidyl-tRNAs which drop off the ribosome during protein synthesis. The sequence is that of Peptidyl-tRNA hydrolase from Sulfurisphaera tokodaii (strain DSM 16993 / JCM 10545 / NBRC 100140 / 7) (Sulfolobus tokodaii).